The chain runs to 83 residues: Exodeoxyribonuclease 7 small subunit (83 aa).

It belongs to the XseB family. Heterooligomer composed of large and small subunits.

The protein resides in the cytoplasm. It catalyses the reaction Exonucleolytic cleavage in either 5'- to 3'- or 3'- to 5'-direction to yield nucleoside 5'-phosphates.. Its function is as follows. Bidirectionally degrades single-stranded DNA into large acid-insoluble oligonucleotides, which are then degraded further into small acid-soluble oligonucleotides. This chain is Exodeoxyribonuclease 7 small subunit, found in Brucella melitensis biotype 1 (strain ATCC 23456 / CCUG 17765 / NCTC 10094 / 16M).